The sequence spans 330 residues: tRNA-modifying protein YgfZ (330 aa).

The folate site is built by W28 and W190.

Belongs to the tRNA-modifying YgfZ family.

It is found in the cytoplasm. Functionally, folate-binding protein involved in regulating the level of ATP-DnaA and in the modification of some tRNAs. It is probably a key factor in regulatory networks that act via tRNA modification, such as initiation of chromosomal replication. The sequence is that of tRNA-modifying protein YgfZ from Yersinia pestis bv. Antiqua (strain Antiqua).